The primary structure comprises 131 residues: UPF0102 protein YraN (131 aa).

Residues Met-1–Thr-19 are compositionally biased toward polar residues. Positions Met-1–Asp-21 are disordered.

Belongs to the UPF0102 family.

The sequence is that of UPF0102 protein YraN from Escherichia coli O127:H6 (strain E2348/69 / EPEC).